We begin with the raw amino-acid sequence, 238 residues long: Modulator of macroautophagy TMEM150B (238 aa).

Residues 1–8 lie on the Cytoplasmic side of the membrane; it reads MWNYLSLL. The helical transmembrane segment at 9 to 29 threads the bilayer; sequence PVILFLWAIAGIWIVFAIAVV. Residue Asn30 is glycosylated (N-linked (GlcNAc...) asparagine). Over 30–51 the chain is Extracellular; it reads NGSVDLNEGFPFISICGSYAPQ. The helical transmembrane segment at 52 to 72 threads the bilayer; that stretch reads SCIFGQVLNIGAALTVWICIV. Residues 73–86 lie on the Cytoplasmic side of the membrane; sequence RHHQLRDWGVKTWQ. Residues 87–107 traverse the membrane as a helical segment; the sequence is NQLILWSGILCALGTSIVGNF. At 108–116 the chain is on the extracellular side; sequence QDKNQKPTH. A helical transmembrane segment spans residues 117–137; it reads LAGAFLAFILGNLYFWLQFFL. The Cytoplasmic segment spans residues 138–156; that stretch reads SWWVKGLPQPGPHWIKSLR. A helical membrane pass occupies residues 157–177; that stretch reads LSLCSLSTILIVAMIVLHALH. Residues 178 to 186 are Extracellular-facing; the sequence is MRSASAICE. A helical membrane pass occupies residues 187–207; the sequence is WVVAMLLFMLFGFFAVDFSIL. Over 208–238 the chain is Cytoplasmic; the sequence is RGCTLHLHPRLDSSLPQAPSGSPNIQMAQVL.

It belongs to the DRAM/TMEM150 family.

It is found in the cell membrane. The protein localises to the endosome membrane. It localises to the cytoplasmic vesicle. The protein resides in the autophagosome membrane. Its function is as follows. Modulator of macroautophagy that causes accumulation of autophagosomes under basal conditions and enhances autophagic flux. Represses cell death and promotes long-term clonogenic survival of cells grown in the absence of glucose in a macroautophagy-independent manner. May have some role in extracellular matrix engulfment or growth factor receptor recycling, both of which can modulate cell survival. This chain is Modulator of macroautophagy TMEM150B, found in Mus musculus (Mouse).